The chain runs to 428 residues: ORC1-type DNA replication protein 5 (428 aa).

Residues 62 to 66 (TGKSL), tyrosine 219, and arginine 231 each bind ATP.

Belongs to the CDC6/cdc18 family.

In terms of biological role, involved in regulation of DNA replication. The polypeptide is ORC1-type DNA replication protein 5 (orc5) (Halobacterium salinarum (strain ATCC 700922 / JCM 11081 / NRC-1) (Halobacterium halobium)).